We begin with the raw amino-acid sequence, 408 residues long: Cytochrome bc1 complex Rieske iron-sulfur subunit (408 aa).

A run of 3 helical transmembrane segments spans residues 56–76 (VGIW…TYIF), 98–118 (MLGI…VLYV), and 166–186 (LLAG…GGMI). The Rieske domain occupies 293–390 (HGPRNAVMLI…ITVDEEGYLI (98 aa)). Residues cysteine 333, histidine 335, cysteine 352, and histidine 355 each coordinate [2Fe-2S] cluster. Cysteines 338 and 354 form a disulfide.

This sequence belongs to the Rieske iron-sulfur protein family. The cytochrome bc1 complex is composed of a cytochrome b (QcrB), the Rieske iron-sulfur protein (QcrA) and a diheme cytochrome c (QcrC) subunit. The bc1 complex forms a supercomplex with cytochrome c oxidase (cytochrome aa3). [2Fe-2S] cluster serves as cofactor.

Its subcellular location is the cell membrane. Its function is as follows. Iron-sulfur subunit of the cytochrome bc1 complex, an essential component of the respiratory electron transport chain required for ATP synthesis. The bc1 complex catalyzes the oxidation of menaquinol and the reduction of cytochrome c in the respiratory chain. The bc1 complex operates through a Q-cycle mechanism that couples electron transfer to generation of the proton gradient that drives ATP synthesis. In Corynebacterium efficiens (strain DSM 44549 / YS-314 / AJ 12310 / JCM 11189 / NBRC 100395), this protein is Cytochrome bc1 complex Rieske iron-sulfur subunit (qcrA).